Reading from the N-terminus, the 182-residue chain is Putative adenylate kinase (182 aa).

Gly-10, Gly-12, Lys-13, Thr-14, and Ser-15 together coordinate ATP. The interval 30–53 (HLNEMIKEEHLYTEVDEVRDAVIA) is NMP. Residues 104-114 (ARGYSEEKIRE) form an LID region. 2 residues coordinate ATP: Arg-105 and Lys-143.

The protein belongs to the adenylate kinase family. AK6 subfamily. As to quaternary structure, interacts with uS11. Not a structural component of 40S pre-ribosomes, but transiently interacts with them by binding to uS11.

It carries out the reaction AMP + ATP = 2 ADP. The enzyme catalyses ATP + H2O = ADP + phosphate + H(+). Functionally, broad-specificity nucleoside monophosphate (NMP) kinase that catalyzes the reversible transfer of the terminal phosphate group between nucleoside triphosphates and monophosphates. Also has ATPase activity. Involved in the late maturation steps of the 30S ribosomal particles, specifically 16S rRNA maturation. While NMP activity is not required for ribosome maturation, ATPase activity is. Associates transiently with small ribosomal subunit protein uS11. ATP hydrolysis breaks the interaction with uS11. May temporarily remove uS11 from the ribosome to enable a conformational change of the ribosomal RNA that is needed for the final maturation step of the small ribosomal subunit. This is Putative adenylate kinase from Methanosarcina barkeri (strain Fusaro / DSM 804).